Consider the following 122-residue polypeptide: MSLKIRLARGGAKKRPYYRIVIADARSPRDGRFIEKIGTFNPLLAKDAENRVVLDADKAKAWLEKGAQPTDRVARFLDAAGLMKRDAKNNPKKGEPGEKAKERAKERAEKAAAGSTEDAAAE.

Positions 81-122 (GLMKRDAKNNPKKGEPGEKAKERAKERAEKAAAGSTEDAAAE) are disordered. Positions 83-110 (MKRDAKNNPKKGEPGEKAKERAKERAEK) are enriched in basic and acidic residues. A compositionally biased stretch (low complexity) spans 111–122 (AAAGSTEDAAAE).

This sequence belongs to the bacterial ribosomal protein bS16 family.

This chain is Small ribosomal subunit protein bS16, found in Xanthobacter autotrophicus (strain ATCC BAA-1158 / Py2).